We begin with the raw amino-acid sequence, 118 residues long: ATP synthase subunit g, mitochondrial (118 aa).

Belongs to the ATPase g subunit family. As to quaternary structure, F-type ATPases have 2 components, CF(1) - the catalytic core - and CF(0) - the membrane proton channel.

Its subcellular location is the mitochondrion membrane. Functionally, mitochondrial membrane ATP synthase (F(1)F(0) ATP synthase or Complex V) produces ATP from ADP in the presence of a proton gradient across the membrane which is generated by electron transport complexes of the respiratory chain. F-type ATPases consist of two structural domains, F(1) - containing the extramembraneous catalytic core, and F(0) - containing the membrane proton channel, linked together by a central stalk and a peripheral stalk. During catalysis, ATP synthesis in the catalytic domain of F(1) is coupled via a rotary mechanism of the central stalk subunits to proton translocation. Part of the complex F(0) domain. Minor subunit located with subunit a in the membrane. This Schizosaccharomyces pombe (strain 972 / ATCC 24843) (Fission yeast) protein is ATP synthase subunit g, mitochondrial (atp20).